The sequence spans 270 residues: Putative tRNA (cytidine(32)/guanosine(34)-2'-O)-methyltransferase (270 aa).

S-adenosyl-L-methionine is bound by residues G53, W55, D78, D94, and D119. K159 serves as the catalytic Proton acceptor.

Belongs to the class I-like SAM-binding methyltransferase superfamily. RNA methyltransferase RlmE family. TRM7 subfamily.

It is found in the cytoplasm. The enzyme catalyses cytidine(32)/guanosine(34) in tRNA + 2 S-adenosyl-L-methionine = 2'-O-methylcytidine(32)/2'-O-methylguanosine(34) in tRNA + 2 S-adenosyl-L-homocysteine + 2 H(+). In terms of biological role, methylates the 2'-O-ribose of nucleotides at positions 32 and 34 of the tRNA anticodon loop of substrate tRNAs. This Dictyostelium discoideum (Social amoeba) protein is Putative tRNA (cytidine(32)/guanosine(34)-2'-O)-methyltransferase (fsjA).